A 170-amino-acid chain; its full sequence is Photosystem II extrinsic protein V (170 aa).

The first 33 residues, 1–33 (MASVFSSLRRSLKGLLVLIPVLIGLAVTSPAQA), serve as a signal peptide directing secretion. Heme c is bound by residues C70, C73, H74, and H125.

This sequence belongs to the cytochrome c family. PsbV subfamily. As to quaternary structure, PSII is composed of 1 copy each of membrane proteins PsbA, PsbB, PsbC, PsbD, PsbE, PsbF, PsbH, PsbI, PsbJ, PsbK, PsbL, PsbM, PsbT, PsbX, PsbY, PsbZ, Psb30/Ycf12, peripheral proteins PsbO, CyanoQ (PsbQ), PsbU, PsbV and a large number of cofactors. It forms dimeric complexes. Heme c serves as cofactor.

The protein localises to the cellular thylakoid membrane. One of the extrinsic, lumenal subunits of photosystem II (PSII). PSII is a light-driven water plastoquinone oxidoreductase, using light energy to abstract electrons from H(2)O, generating a proton gradient subsequently used for ATP formation. The extrinsic proteins stabilize the structure of photosystem II oxygen-evolving complex (OEC), the ion environment of oxygen evolution and protect the OEC against heat-induced inactivation. Low-potential cytochrome c that plays a role in the OEC of PSII. This is Photosystem II extrinsic protein V from Synechococcus sp. (strain CC9605).